Consider the following 257-residue polypeptide: 3-methyl-2-oxobutanoate hydroxymethyltransferase (257 aa).

Positions 42 and 81 each coordinate Mg(2+). 3-methyl-2-oxobutanoate-binding positions include 42–43 (DS), Asp-81, and Lys-110. Residue Glu-112 participates in Mg(2+) binding. Glu-176 serves as the catalytic Proton acceptor.

The protein belongs to the PanB family. As to quaternary structure, homodecamer; pentamer of dimers. Mg(2+) is required as a cofactor.

The protein localises to the cytoplasm. The enzyme catalyses 3-methyl-2-oxobutanoate + (6R)-5,10-methylene-5,6,7,8-tetrahydrofolate + H2O = 2-dehydropantoate + (6S)-5,6,7,8-tetrahydrofolate. The protein operates within cofactor biosynthesis; (R)-pantothenate biosynthesis; (R)-pantoate from 3-methyl-2-oxobutanoate: step 1/2. Its function is as follows. Catalyzes the reversible reaction in which hydroxymethyl group from 5,10-methylenetetrahydrofolate is transferred onto alpha-ketoisovalerate to form ketopantoate. The chain is 3-methyl-2-oxobutanoate hydroxymethyltransferase from Pelagibacter ubique (strain HTCC1062).